Here is a 230-residue protein sequence, read N- to C-terminus: MLNAKHKIKAVILLSGGLDSTTTLAIAKSKKFECYSLSFDYGQKQESELQSAKNIAKIFITSEHRVVKISLSGISKSALTNDNIDVPKFSQSNKIPITYVPARNTIFLSYALAWSEVLNCQHIFIGVNELDYSGYPDCRKSYIKAFEIMANLATKQGIEGQKLTIHTPLIHLNKAQIIKKGLSLGIDYTLTTTCYQADKNGKACGICDACEYRKLGFKEAKVPDQTRYQT.

14 to 24 (LSGGLDSTTTL) contacts ATP. Zn(2+)-binding residues include Cys194, Cys204, Cys207, and Cys210.

This sequence belongs to the QueC family. Zn(2+) serves as cofactor.

The enzyme catalyses 7-carboxy-7-deazaguanine + NH4(+) + ATP = 7-cyano-7-deazaguanine + ADP + phosphate + H2O + H(+). Its pathway is purine metabolism; 7-cyano-7-deazaguanine biosynthesis. In terms of biological role, catalyzes the ATP-dependent conversion of 7-carboxy-7-deazaguanine (CDG) to 7-cyano-7-deazaguanine (preQ(0)). The protein is 7-cyano-7-deazaguanine synthase of Vesicomyosocius okutanii subsp. Calyptogena okutanii (strain HA).